Here is a 307-residue protein sequence, read N- to C-terminus: Urease accessory protein UreD (307 aa).

This sequence belongs to the UreD family. As to quaternary structure, ureD, UreF and UreG form a complex that acts as a GTP-hydrolysis-dependent molecular chaperone, activating the urease apoprotein by helping to assemble the nickel containing metallocenter of UreC. The UreE protein probably delivers the nickel.

It is found in the cytoplasm. In terms of biological role, required for maturation of urease via the functional incorporation of the urease nickel metallocenter. The protein is Urease accessory protein UreD of Prochlorococcus marinus (strain NATL2A).